Consider the following 101-residue polypeptide: Small ribosomal subunit protein uS14 (101 aa).

The protein belongs to the universal ribosomal protein uS14 family. Part of the 30S ribosomal subunit. Contacts proteins S3 and S10.

Functionally, binds 16S rRNA, required for the assembly of 30S particles and may also be responsible for determining the conformation of the 16S rRNA at the A site. This chain is Small ribosomal subunit protein uS14, found in Pasteurella multocida (strain Pm70).